Here is a 129-residue protein sequence, read N- to C-terminus: Small ribosomal subunit protein uS8 (129 aa).

Belongs to the universal ribosomal protein uS8 family. As to quaternary structure, part of the 30S ribosomal subunit. Contacts proteins S5 and S12.

Functionally, one of the primary rRNA binding proteins, it binds directly to 16S rRNA central domain where it helps coordinate assembly of the platform of the 30S subunit. This chain is Small ribosomal subunit protein uS8, found in Colwellia psychrerythraea (strain 34H / ATCC BAA-681) (Vibrio psychroerythus).